The sequence spans 348 residues: Nicotinate-nucleotide--dimethylbenzimidazole phosphoribosyltransferase (348 aa).

Residue Glu316 is the Proton acceptor of the active site.

Belongs to the CobT family.

The catalysed reaction is 5,6-dimethylbenzimidazole + nicotinate beta-D-ribonucleotide = alpha-ribazole 5'-phosphate + nicotinate + H(+). Its pathway is nucleoside biosynthesis; alpha-ribazole biosynthesis; alpha-ribazole from 5,6-dimethylbenzimidazole: step 1/2. Catalyzes the synthesis of alpha-ribazole-5'-phosphate from nicotinate mononucleotide (NAMN) and 5,6-dimethylbenzimidazole (DMB). The sequence is that of Nicotinate-nucleotide--dimethylbenzimidazole phosphoribosyltransferase from Xanthomonas euvesicatoria pv. vesicatoria (strain 85-10) (Xanthomonas campestris pv. vesicatoria).